The following is a 398-amino-acid chain: 1,4-beta-D-glucan cellobiohydrolase CEL6C (398 aa).

The N-terminal stretch at 1–18 (MKITSSAAALALVASAVA) is a signal peptide. Asn70 is a glycosylation site (N-linked (GlcNAc...) asparagine). Asp125 is an active-site residue. Residue Asp170 is the Proton donor of the active site. Trp218, Trp318, Lys346, and Glu350 together coordinate substrate.

This sequence belongs to the glycosyl hydrolase 6 (cellulase B) family. Both N- and O-glycosylated.

It localises to the secreted. It carries out the reaction Hydrolysis of (1-&gt;4)-beta-D-glucosidic linkages in cellulose and cellotetraose, releasing cellobiose from the non-reducing ends of the chains.. Its function is as follows. Exoglucanase that plays an important function in biomass degradation by catalyzing the hydrolysis of the non-reducing end beta-1,4-glucosidic linkages in cellulose and cellotetraose to release cellobiose. Hydrolyzes crystalline and amorphous cellulose but is inactive on hydroxyethyl cellulose, mannan, galactomannan, xyloglucan, arabinoxylan, arabinan, xylan, and pectin. This is 1,4-beta-D-glucan cellobiohydrolase CEL6C from Podospora anserina (strain S / ATCC MYA-4624 / DSM 980 / FGSC 10383) (Pleurage anserina).